The chain runs to 829 residues: Disintegrin and metalloproteinase domain-containing protein 23 (829 aa).

A signal peptide spans 1–55 (MKPPGSISRRPTLTGCSLPGASCGPGRCPAGPVPARAPPCRLLLVLLLLPALATS). The propeptide occupies 56–283 (SRPRARGAAA…ELQWLRRRKR (228 aa)). Asn72, Asn92, Asn97, and Asn260 each carry an N-linked (GlcNAc...) asparagine glycan. Topologically, residues 284 to 789 (AVNPSRGVFE…EGPKGPSATN (506 aa)) are extracellular. Residues 296-493 (KYLELMIVND…GGGACLFNRP (198 aa)) form the Peptidase M12B domain. 3 disulfide bridges follow: Cys405–Cys488, Cys447–Cys472, and Cys449–Cys456. The 87-residue stretch at 499–585 (PTECGNGYVE…QCPPNLHKQD (87 aa)) folds into the Disintegrin domain. N-linked (GlcNAc...) asparagine glycosylation is found at Asn544 and Asn545. Cysteines 557 and 577 form a disulfide. Residues Asn661 and Asn729 are each glycosylated (N-linked (GlcNAc...) asparagine). The EGF-like domain maps to 729 to 766 (NMSSCPLDSRGKVCSGHGVCSNEATCICDFTWAGTDCS). 3 cysteine pairs are disulfide-bonded: Cys733/Cys748, Cys742/Cys754, and Cys756/Cys765. Residues 790-810 (LIIGSIAGAILVAAIVLGGTG) form a helical membrane-spanning segment. Residues 811–829 (WGFKNVKKRRFDPTQQGPI) are Cytoplasmic-facing.

As to quaternary structure, can bind to LGI1 and LGI4. In terms of tissue distribution, brain specific.

Its subcellular location is the cell membrane. The protein resides in the secreted. In terms of biological role, may play a role in cell-cell and cell-matrix interactions. This is a non-catalytic metalloprotease-like protein. This chain is Disintegrin and metalloproteinase domain-containing protein 23 (Adam23), found in Mus musculus (Mouse).